Reading from the N-terminus, the 144-residue chain is Large ribosomal subunit protein uL15 (144 aa).

Basic and acidic residues predominate over residues methionine 1–glutamate 10. A disordered region spans residues methionine 1–glutamine 52. Residues threonine 23 to glutamine 35 show a composition bias toward gly residues.

The protein belongs to the universal ribosomal protein uL15 family. As to quaternary structure, part of the 50S ribosomal subunit.

In terms of biological role, binds to the 23S rRNA. This Ligilactobacillus salivarius (strain UCC118) (Lactobacillus salivarius) protein is Large ribosomal subunit protein uL15.